We begin with the raw amino-acid sequence, 275 residues long: MGIRFLKAFTPGTRNRSVSDFSEITTTKREKSLSKMNHRSKGRNNRGVITCRHKGGGHKRLYREIDFRRDKIGIPGKVMTIEYDPNRNARIALVMYEDGEKRYILQPNGLRVGDSIISDLQAPILVGNALPLRNIPLGAQVHNVEFQPGSGGQLARSAGALLDILAKEGNFVTVRLPSKEIRLISKNSWATIGQVGNLEAYSIRIGKAGRNRWLGKRPTVRGSVMNPNDHPHGGGEGRAPIGRCRPVTPWGRPALGQFTRQPKKYSSKFILRKRK.

Disordered regions lie at residues 32 to 53 (SLSK…TCRH) and 218 to 242 (PTVR…APIG).

Belongs to the universal ribosomal protein uL2 family. Part of the 50S ribosomal subunit.

The protein localises to the plastid. It localises to the chloroplast. The protein is Large ribosomal subunit protein uL2c (rpl2) of Tetradesmus obliquus (Green alga).